We begin with the raw amino-acid sequence, 412 residues long: Putative F-box protein At3g22940 (412 aa).

Residues 1–38 form the F-box domain; sequence MPLEEILSRLPLKSTRAVRSTCKKWDSLFKNRSFISKA.

The polypeptide is Putative F-box protein At3g22940 (Arabidopsis thaliana (Mouse-ear cress)).